The chain runs to 619 residues: Nuclear hormone receptor family member nhr-6 (619 aa).

Residues methionine 1–cysteine 18 are compositionally biased toward polar residues. Disordered regions lie at residues methionine 1 to serine 29, methionine 58 to threonine 86, glutamine 103 to proline 134, and glutamine 196 to proline 232. The segment covering serine 19–serine 29 has biased composition (low complexity). Residues lysine 125–proline 134 show a composition bias toward polar residues. A compositionally biased stretch (low complexity) spans glycine 206–proline 232. Residues aspartate 265 to histidine 340 constitute a DNA-binding region (nuclear receptor). 2 consecutive NR C4-type zinc fingers follow at residues cysteine 268–cysteine 288 and cysteine 304–cysteine 328. A disordered region spans residues glycine 345–proline 365. Positions arginine 346 to leucine 356 are enriched in basic residues. An NR LBD domain is found at proline 365–serine 600. The tract at residues leucine 589–serine 600 is AF-2.

The protein belongs to the nuclear hormone receptor family. NR4 subfamily. As to expression, in hermaphrodites, expressed in the developing spermatheca and dorsal uterus. Expression includes the 8 cells of the dorsal somatic gonad primordium and the sujc cells that form the core of the spermatheca-uterine valve. Expressed in the precursor cells of the spermatheca-sheath lineages (SS cells) and in the precursors and descendents of the dorsal-uterine lineage (DU cells). In both hermaphroditic and male animals, expressed in a pair of head chemosensory neurons.

It is found in the nucleus. Its function is as follows. Transcriptional activator that induces gene expression by binding to the NGFI-B response element (NBRE) 5'-AAAGGTCA-3'. Required for proper morphogenesis of the spermatheca and the spermatheca-uterine valve formation. Promotes cell proliferation and differentiation of the spermatheca precursor cells during spermatheca development in larval stage L4. Might play a role in promoting G1/S phase progression in the spermatheca precursor cell lineage. Also required for the differentiation of the spermatheca-uterine junction core (sujc) cells which are generating the spermatheca-uterine valve. This chain is Nuclear hormone receptor family member nhr-6 (nhr-6), found in Caenorhabditis elegans.